The chain runs to 282 residues: uncharacterized protein (282 aa).

Residues 22 to 42 traverse the membrane as a helical segment; it reads YLFTLGSFVTMFFVLCISPVF.

The protein localises to the cell membrane. This is an uncharacterized protein from Bacillus anthracis.